Here is a 480-residue protein sequence, read N- to C-terminus: tRNA-2-methylthio-N(6)-dimethylallyladenosine synthase (480 aa).

Residues 3 to 120 enclose the MTTase N-terminal domain; the sequence is KKLYIKTWGC…LPEMLNQLQH (118 aa). [4Fe-4S] cluster contacts are provided by C12, C49, C83, C157, C161, and C164. In terms of domain architecture, Radical SAM core spans 143-375; that stretch reads KADGASAFVS…QEQITHQALR (233 aa). The 64-residue stretch at 378–441 folds into the TRAM domain; the sequence is RQMLNTEQRV…ANSLRGELVR (64 aa).

It belongs to the methylthiotransferase family. MiaB subfamily. In terms of assembly, monomer. The cofactor is [4Fe-4S] cluster.

Its subcellular location is the cytoplasm. It carries out the reaction N(6)-dimethylallyladenosine(37) in tRNA + (sulfur carrier)-SH + AH2 + 2 S-adenosyl-L-methionine = 2-methylsulfanyl-N(6)-dimethylallyladenosine(37) in tRNA + (sulfur carrier)-H + 5'-deoxyadenosine + L-methionine + A + S-adenosyl-L-homocysteine + 2 H(+). Its function is as follows. Catalyzes the methylthiolation of N6-(dimethylallyl)adenosine (i(6)A), leading to the formation of 2-methylthio-N6-(dimethylallyl)adenosine (ms(2)i(6)A) at position 37 in tRNAs that read codons beginning with uridine. The polypeptide is tRNA-2-methylthio-N(6)-dimethylallyladenosine synthase (Colwellia psychrerythraea (strain 34H / ATCC BAA-681) (Vibrio psychroerythus)).